A 396-amino-acid chain; its full sequence is Elongation factor Tu (396 aa).

A tr-type G domain is found at 10–206 (KPHCNIGTIG…NVDEYIPQPE (197 aa)). The segment at 19–26 (GHVDHGKT) is G1. Residue 19–26 (GHVDHGKT) coordinates GTP. Residue Thr26 coordinates Mg(2+). The interval 60–64 (GITIS) is G2. Residues 81 to 84 (DCPG) are G3. Residues 81-85 (DCPGH) and 136-139 (NKCD) each bind GTP. The G4 stretch occupies residues 136 to 139 (NKCD). The interval 174–176 (SAL) is G5.

Belongs to the TRAFAC class translation factor GTPase superfamily. Classic translation factor GTPase family. EF-Tu/EF-1A subfamily. Monomer.

It localises to the cytoplasm. The catalysed reaction is GTP + H2O = GDP + phosphate + H(+). Its function is as follows. GTP hydrolase that promotes the GTP-dependent binding of aminoacyl-tRNA to the A-site of ribosomes during protein biosynthesis. The polypeptide is Elongation factor Tu (Bradyrhizobium sp. (strain BTAi1 / ATCC BAA-1182)).